The sequence spans 327 residues: Ubiquinone biosynthesis protein COQ4, mitochondrial (327 aa).

Positions 208, 209, 212, and 224 each coordinate Zn(2+).

This sequence belongs to the COQ4 family. As to quaternary structure, component of a multi-subunit COQ enzyme complex, composed of at least COQ3, COQ4, COQ5, COQ6, COQ7 and COQ9. Zn(2+) serves as cofactor.

The protein resides in the mitochondrion inner membrane. It catalyses the reaction a 4-hydroxy-3-methoxy-5-(all-trans-polyprenyl)benzoate + H(+) = a 2-methoxy-6-(all-trans-polyprenyl)phenol + CO2. Its pathway is cofactor biosynthesis; ubiquinone biosynthesis. Its function is as follows. Lyase that catalyzes the C1-decarboxylation of 4-hydroxy-3-methoxy-5-(all-trans-polyprenyl)benzoic acid into 2-methoxy-6-(all-trans-polyprenyl)phenol during ubiquinone biosynthesis. The chain is Ubiquinone biosynthesis protein COQ4, mitochondrial from Lachancea thermotolerans (strain ATCC 56472 / CBS 6340 / NRRL Y-8284) (Yeast).